A 357-amino-acid chain; its full sequence is Serine proteinase inhibitor 1 (357 aa).

Belongs to the serpin family. Poxviruses subfamily.

The protein resides in the host cytoplasm. In terms of biological role, this viral protein may be involved in the regulation of the complement cascade. Involved in red pock formation. The sequence is that of Serine proteinase inhibitor 1 (SPI-1) from Oryctolagus cuniculus (Rabbit).